The chain runs to 480 residues: Protein nucleotidyltransferase YdiU (480 aa).

ATP contacts are provided by Gly-86, Gly-88, Arg-89, Lys-109, Asp-121, Gly-122, Arg-172, and Arg-179. Residue Asp-248 is the Proton acceptor of the active site. Asn-249 and Asp-258 together coordinate Mg(2+). Asp-258 is a binding site for ATP.

Belongs to the SELO family. Mg(2+) is required as a cofactor. The cofactor is Mn(2+).

The enzyme catalyses L-seryl-[protein] + ATP = 3-O-(5'-adenylyl)-L-seryl-[protein] + diphosphate. It catalyses the reaction L-threonyl-[protein] + ATP = 3-O-(5'-adenylyl)-L-threonyl-[protein] + diphosphate. The catalysed reaction is L-tyrosyl-[protein] + ATP = O-(5'-adenylyl)-L-tyrosyl-[protein] + diphosphate. It carries out the reaction L-histidyl-[protein] + UTP = N(tele)-(5'-uridylyl)-L-histidyl-[protein] + diphosphate. The enzyme catalyses L-seryl-[protein] + UTP = O-(5'-uridylyl)-L-seryl-[protein] + diphosphate. It catalyses the reaction L-tyrosyl-[protein] + UTP = O-(5'-uridylyl)-L-tyrosyl-[protein] + diphosphate. In terms of biological role, nucleotidyltransferase involved in the post-translational modification of proteins. It can catalyze the addition of adenosine monophosphate (AMP) or uridine monophosphate (UMP) to a protein, resulting in modifications known as AMPylation and UMPylation. This chain is Protein nucleotidyltransferase YdiU, found in Salmonella choleraesuis (strain SC-B67).